We begin with the raw amino-acid sequence, 358 residues long: Sulfate/thiosulfate import ATP-binding protein CysA (358 aa).

Positions 3-237 (IKIENLEKHF…PQTPFVTQFV (235 aa)) constitute an ABC transporter domain. 35–42 (GPSGCGKT) is a binding site for ATP.

The protein belongs to the ABC transporter superfamily. Sulfate/tungstate importer (TC 3.A.1.6) family. As to quaternary structure, the complex is composed of two ATP-binding proteins (CysA), two transmembrane proteins (CysT and CysW) and a solute-binding protein (CysP).

Its subcellular location is the cell inner membrane. The catalysed reaction is sulfate(out) + ATP + H2O = sulfate(in) + ADP + phosphate + H(+). The enzyme catalyses thiosulfate(out) + ATP + H2O = thiosulfate(in) + ADP + phosphate + H(+). In terms of biological role, part of the ABC transporter complex CysAWTP involved in sulfate/thiosulfate import. Responsible for energy coupling to the transport system. This is Sulfate/thiosulfate import ATP-binding protein CysA from Mannheimia succiniciproducens (strain KCTC 0769BP / MBEL55E).